Reading from the N-terminus, the 335-residue chain is Glycerol-3-phosphate dehydrogenase [NAD(P)+] (335 aa).

Positions 10, 11, 31, and 105 each coordinate NADPH. 3 residues coordinate sn-glycerol 3-phosphate: lysine 105, glycine 136, and serine 138. Alanine 140 is a binding site for NADPH. Sn-glycerol 3-phosphate-binding residues include lysine 191, aspartate 244, serine 254, arginine 255, and asparagine 256. Lysine 191 functions as the Proton acceptor in the catalytic mechanism. Residue arginine 255 participates in NADPH binding. NADPH contacts are provided by valine 279 and glutamate 281.

This sequence belongs to the NAD-dependent glycerol-3-phosphate dehydrogenase family.

It localises to the cytoplasm. It carries out the reaction sn-glycerol 3-phosphate + NAD(+) = dihydroxyacetone phosphate + NADH + H(+). It catalyses the reaction sn-glycerol 3-phosphate + NADP(+) = dihydroxyacetone phosphate + NADPH + H(+). Its pathway is membrane lipid metabolism; glycerophospholipid metabolism. In terms of biological role, catalyzes the reduction of the glycolytic intermediate dihydroxyacetone phosphate (DHAP) to sn-glycerol 3-phosphate (G3P), the key precursor for phospholipid synthesis. This chain is Glycerol-3-phosphate dehydrogenase [NAD(P)+], found in Myxococcus xanthus (strain DK1622).